The chain runs to 247 residues: Transmembrane protein 33 (247 aa).

The residue at position 2 (Ala2) is an N-acetylalanine. The Lumenal segment spans residues 2–31; the sequence is ADTTPNGPQGAGAVQFMMTNKLDTAMWLSR. The chain crosses the membrane as a helical span at residues 32 to 52; sequence LFTVYCSALFVLPLLGLHEAA. Over 53–100 the chain is Cytoplasmic; sequence SFYQRALLANALTSALRLHQRLPHFQLSRAFLAQALLEDSCHYLLYSL. Residues 101 to 121 form a helical membrane-spanning segment; it reads IFVNSYPVTMSIFPVLLFSLL. The Lumenal portion of the chain corresponds to 122–155; that stretch reads HAATYTKKVLDAKGSNSLPLLRSVLDKLSTNQQN. The helical transmembrane segment at 156–176 threads the bilayer; that stretch reads ILKFIACNEIFLMPATVFMLF. At 177-247 the chain is on the cytoplasmic side; that stretch reads SGQGSLLQPF…FISRLAPTVA (71 aa).

It belongs to the PER33/POM33 family. As to quaternary structure, interacts with EIF2AK3. Interacts with ARL6IP1, isoform RTN1-A of RTN1, isoform RTN2-B of RTN2, isoform 3 of RTN3 and isoform 3 of RTN4. Interacts with RNF5. Interacts with RNF26. Interacts with PKD2. As to expression, highly expressed in the liver and significantly in brain, lungs and kidneys.

It is found in the endoplasmic reticulum membrane. The protein resides in the melanosome. Its subcellular location is the nucleus envelope. Acts as a regulator of the tubular endoplasmic reticulum (ER) network by modulating intracellular calcium homeostasis. Mechanistically, stimulates PKD2 calcium-dependent activity. Suppresses the RTN3/4-induced formation of the ER tubules. Positively regulates PERK-mediated and IRE1-mediated unfolded protein response signaling. Plays an essential role in VEGF-mediated release of Ca(2+) from ER stores during angiogenesis. Also plays a role in the modulation of innate immune signaling through the cGAS-STING pathway by interacting with RNF26. Participates in lipid metabolism by acting as a downstream effector of the pyruvate kinase/PKM. Forms a complex with RNF5 to facilitate polyubiquitination and subsequent degradation of SCAP on the ER membrane. The polypeptide is Transmembrane protein 33 (Tmem33) (Rattus norvegicus (Rat)).